The following is a 227-amino-acid chain: Transmembrane emp24 domain-containing protein 1 (227 aa).

A signal peptide spans 1-23 (MMAAGAALALALWLLMPPVGVGG). The Extracellular portion of the chain corresponds to 24–194 (AGPPPIQDGE…LQEGNLERVN (171 aa)). The GOLD domain occupies 43–125 (KQCFYQSAPA…EKLVFFELIF (83 aa)). Residues 145-170 (EMLDVKMEDIKESIETMRTRLERSIQ) adopt a coiled-coil conformation. The helical transmembrane segment at 195-215 (FWSAVNVAVLLLVAVLQVCTL) threads the bilayer. Over 216-227 (KRFFQDKRPVPT) the chain is Cytoplasmic. A COPII vesicle coat-binding motif is present at residues 218–219 (FF). The COPI vesicle coat-binding signature appears at 218–227 (FFQDKRPVPT).

The protein belongs to the EMP24/GP25L family. In terms of assembly, homodimer in endoplasmic reticulum, endoplasmic reticulum-Golgi intermediate compartment and cis-Golgi network. Interacts with IL1RL1. Interacts with RNF26; this interaction is important to modulate innate immune signaling through the cGAS-STING pathway.

It localises to the cell membrane. The protein resides in the endoplasmic reticulum membrane. Its subcellular location is the golgi apparatus. The protein localises to the cis-Golgi network membrane. It is found in the endoplasmic reticulum-Golgi intermediate compartment membrane. Its function is as follows. Potential role in vesicular protein trafficking, mainly in the early secretory pathway. May act as a cargo receptor at the lumenal side for incorporation of secretory cargo molecules into transport vesicles and may be involved in vesicle coat formation at the cytoplasmic side. Plays a positive role in IL-33-mediated IL-8 and IL-6 production by interacting with interleukin-33 receptor IL1RL1. Plays also a role in the modulation of innate immune signaling through the cGAS-STING pathway by interacting with RNF26. This chain is Transmembrane emp24 domain-containing protein 1 (TMED1), found in Pongo abelii (Sumatran orangutan).